A 210-amino-acid polypeptide reads, in one-letter code: Large ribosomal subunit protein uL4 (210 aa).

Residues 46–89 (QGTASTLTRSEVRGGGRKPYKQKGTGRARQGSIRTPLRPGGGII) are disordered. Positions 60-71 (GGRKPYKQKGTG) are enriched in basic residues.

The protein belongs to the universal ribosomal protein uL4 family. In terms of assembly, part of the 50S ribosomal subunit.

In terms of biological role, one of the primary rRNA binding proteins, this protein initially binds near the 5'-end of the 23S rRNA. It is important during the early stages of 50S assembly. It makes multiple contacts with different domains of the 23S rRNA in the assembled 50S subunit and ribosome. Forms part of the polypeptide exit tunnel. This is Large ribosomal subunit protein uL4 from Prochlorococcus marinus (strain MIT 9215).